The sequence spans 372 residues: uncharacterized protein (372 aa).

Positions 328–353 (KKGQPCKDEDAVTVPLPSSDPGKETQ) are disordered.

In terms of biological role, induces the SOS system when expressed in E.coli, therefore, it may play a role in DNA metabolism and/or in genome stability. This is an uncharacterized protein from Saccharomyces cerevisiae (strain ATCC 204508 / S288c) (Baker's yeast).